Consider the following 180-residue polypeptide: MAVIKVRKTGQVIEGEDNVRAFLNSQGVLYEHWDITKLPEHLRDKYVLTDEEKNEILATFKDEIEDLAARRGYKTWDIVALSDATPNLDELLKKFEQVHIHTEDEVRAITAGHGIFIIKGDKETGYFDVELEAGDVISVPEGNPHYFTLMDDRRVVAVRLFIDPSGWVAHPYEEKEEAVQ.

4 residues coordinate Fe(2+): H99, H101, E105, and H145. Ni(2+)-binding residues include H99, H101, E105, and H145.

The protein belongs to the acireductone dioxygenase (ARD) family. Monomer. Fe(2+) serves as cofactor. Requires Ni(2+) as cofactor.

The catalysed reaction is 1,2-dihydroxy-5-(methylsulfanyl)pent-1-en-3-one + O2 = 3-(methylsulfanyl)propanoate + CO + formate + 2 H(+). It catalyses the reaction 1,2-dihydroxy-5-(methylsulfanyl)pent-1-en-3-one + O2 = 4-methylsulfanyl-2-oxobutanoate + formate + 2 H(+). Its pathway is amino-acid biosynthesis; L-methionine biosynthesis via salvage pathway; L-methionine from S-methyl-5-thio-alpha-D-ribose 1-phosphate: step 5/6. Its function is as follows. Catalyzes 2 different reactions between oxygen and the acireductone 1,2-dihydroxy-3-keto-5-methylthiopentene (DHK-MTPene) depending upon the metal bound in the active site. Fe-containing acireductone dioxygenase (Fe-ARD) produces formate and 2-keto-4-methylthiobutyrate (KMTB), the alpha-ketoacid precursor of methionine in the methionine recycle pathway. Ni-containing acireductone dioxygenase (Ni-ARD) produces methylthiopropionate, carbon monoxide and formate, and does not lie on the methionine recycle pathway. The protein is Acireductone dioxygenase of Geobacillus kaustophilus (strain HTA426).